A 1885-amino-acid polypeptide reads, in one-letter code: Chitin synthase 5 (1885 aa).

The Myosin motor domain maps to 1-789; the sequence is MATRGNVPAH…SIALTGSQAA (789 aa). Position 99–106 (99–106) interacts with ATP; sequence GESGSGKT. 2 N-linked (GlcNAc...) asparagine glycosylation sites follow: Asn219 and Asn429. Positions 601–649 are disordered; that stretch reads KPLRMPSVSRKKHDQLRRMASRRADRSPAPQEEEPLPGTEEAKVRRTKP. The span at 609–621 shows a compositional bias: basic residues; that stretch reads SRKKHDQLRRMAS. An actin-binding region spans residues 666-690; it reads LDNITKSLTAPNVNNYFVFCLKPND. N-linked (GlcNAc...) asparagine glycosylation occurs at Asn668. Positions 794–817 are disordered; sequence GDIGSPSRPDTPGHNPFSDSKARL. 2 helical membrane-spanning segments follow: residues 894–914 and 929–949; these read WLAI…KWIG and FAIN…IIVF. Residues 957-1016 form the Cytochrome b5 heme-binding domain; it reads QNVYSAAELSAHDGKGKHSAYVAIRGQVFDLGAFMPNHYPKIIPQSSLKKYAGVDATGLF. Asn1043 and Asn1068 each carry an N-linked (GlcNAc...) asparagine glycan. The chain crosses the membrane as a helical span at residues 1205-1225; it reads ILLAVSILLCSVIGFKFFAAL. N-linked (GlcNAc...) asparagine glycosylation is found at Asn1462 and Asn1568. Helical transmembrane passes span 1599–1619, 1626–1646, and 1653–1673; these read LLST…IVLL, VPLT…IIFI, and MIGW…GLPL. Residues Asn1759 and Asn1790 are each glycosylated (N-linked (GlcNAc...) asparagine). The DEK-C domain maps to 1827–1882; sequence LPTDDMLLNEIRDILRTADLMTVTKKGIKQELERRFNVNLDMKRAYIGSATEAILS.

The protein in the N-terminal section; belongs to the TRAFAC class myosin-kinesin ATPase superfamily. Myosin family. This sequence in the C-terminal section; belongs to the chitin synthase family. Class V subfamily. Maximal activity requires trypsin activation, suggesting a zymogenic nature.

Its subcellular location is the cell membrane. The protein resides in the membrane. The enzyme catalyses [(1-&gt;4)-N-acetyl-beta-D-glucosaminyl](n) + UDP-N-acetyl-alpha-D-glucosamine = [(1-&gt;4)-N-acetyl-beta-D-glucosaminyl](n+1) + UDP + H(+). Functionally, polymerizes chitin, a structural polymer of the cell wall and septum, by transferring the sugar moiety of UDP-GlcNAc to the non-reducing end of the growing chitin polymer. CHS5 is required for the sustained growth at 37 degrees Celsius and is of critical importance for virulence. Especially important at infection temperatures for maintaining the cell wall integrity of developing yeast buds, elongating tips of hyphae, and random sites of expansion in sclerotic forms. The polypeptide is Chitin synthase 5 (Exophiala dermatitidis (Black yeast-like fungus)).